Consider the following 155-residue polypeptide: Ribosomal RNA large subunit methyltransferase H (155 aa).

S-adenosyl-L-methionine contacts are provided by residues glycine 104 and 123-128 (FGNITL).

Belongs to the RNA methyltransferase RlmH family. As to quaternary structure, homodimer.

It localises to the cytoplasm. It carries out the reaction pseudouridine(1915) in 23S rRNA + S-adenosyl-L-methionine = N(3)-methylpseudouridine(1915) in 23S rRNA + S-adenosyl-L-homocysteine + H(+). Specifically methylates the pseudouridine at position 1915 (m3Psi1915) in 23S rRNA. The polypeptide is Ribosomal RNA large subunit methyltransferase H (Mesoplasma florum (strain ATCC 33453 / NBRC 100688 / NCTC 11704 / L1) (Acholeplasma florum)).